The primary structure comprises 241 residues: Uracil-DNA glycosylase (241 aa).

The active-site Proton acceptor is the D71.

This sequence belongs to the uracil-DNA glycosylase (UDG) superfamily. UNG family.

Its subcellular location is the cytoplasm. It catalyses the reaction Hydrolyzes single-stranded DNA or mismatched double-stranded DNA and polynucleotides, releasing free uracil.. Its function is as follows. Excises uracil residues from the DNA which can arise as a result of misincorporation of dUMP residues by DNA polymerase or due to deamination of cytosine. The chain is Uracil-DNA glycosylase from Xanthomonas euvesicatoria pv. vesicatoria (strain 85-10) (Xanthomonas campestris pv. vesicatoria).